Here is a 501-residue protein sequence, read N- to C-terminus: MVKIRPDEISNIIRQQIEQYSQEVKVVSVGTVLQVGDGIARIYGLEKVMAGELLEFEDGTVGIALNLEADNVGAVLMGSGLSIQEGSAVKATGKIAQVPVGEAFLGRVVNALARPIDGKGDIASKESRLLEGPAPGIIERRSVYEPMQTGLIAIDAMIPIGRGQRELIIGDRQTGKTAIATDAIVNQKGSGVICVYVAIGQKASSVAQIVTTLQEKDAMRYTIIVSETADSPATLQYLAPYTGAALAEYFMYSGRHTLVIYDDLSKQAQAYREMSLLLRRPPGREAYPGDVFYLHSRLLERAAKLSDALGEGSMTALPVIETQGGDVSAYIPTNVISITDGQIFLSADIFNAGIRPAINVGISVSRVGSAAQVKAMKQVASKLKLELAQFSELEAFAQFSSDLDAATQAQLARGVRLRELLKQAQSEPLSVADQVATIYTGTNGYLDDLAPTQVRAFLSALRSYLATSKPKYAQIMAANVFTPEAESLVKEAIAETKASFK.

Residue 170–177 (GDRQTGKT) participates in ATP binding.

Belongs to the ATPase alpha/beta chains family. F-type ATPases have 2 components, CF(1) - the catalytic core - and CF(0) - the membrane proton channel. CF(1) has five subunits: alpha(3), beta(3), gamma(1), delta(1), epsilon(1). CF(0) has four main subunits: a, b, b' and c.

It is found in the plastid. Its subcellular location is the chloroplast thylakoid membrane. It catalyses the reaction ATP + H2O + 4 H(+)(in) = ADP + phosphate + 5 H(+)(out). In terms of biological role, produces ATP from ADP in the presence of a proton gradient across the membrane. The alpha chain is a regulatory subunit. This Nephroselmis olivacea (Green alga) protein is ATP synthase subunit alpha, chloroplastic.